We begin with the raw amino-acid sequence, 354 residues long: Hyaluronan and proteoglycan link protein 1 (354 aa).

A propeptide spanning residues 1-15 (MKSLLLLVLISICGA) is cleaved from the precursor. Residues Asn-21 and Asn-56 are each glycosylated (N-linked (GlcNAc...) asparagine). The Ig-like V-type domain occupies 38–152 (PRLLVEAEQA…EGLEDDTAVV (115 aa)). Disulfide bonds link Cys-61/Cys-139, Cys-181/Cys-252, Cys-205/Cys-226, Cys-279/Cys-349, and Cys-304/Cys-325. 2 consecutive Link domains span residues 159-254 (VVFP…FCFT) and 259-351 (GRFY…YCFR).

It belongs to the HAPLN family.

It localises to the secreted. Its subcellular location is the extracellular space. The protein resides in the extracellular matrix. Stabilizes the aggregates of proteoglycan monomers with hyaluronic acid in the extracellular cartilage matrix. The protein is Hyaluronan and proteoglycan link protein 1 (HAPLN1) of Equus caballus (Horse).